The sequence spans 1025 residues: Dihydropyrimidine dehydrogenase [NADP(+)] (1025 aa).

In terms of domain architecture, 4Fe-4S ferredoxin-type 1 spans 69 to 100; that stretch reads ERGALREAVRCLKCADAPCQKSCPTSLDIKSF. [4Fe-4S] cluster is bound by residues Cys-79, Cys-82, Cys-87, and Cys-91. Val-129 contacts FAD. Residues Cys-130, Cys-136, Cys-140, and Gln-156 each contribute to the [4Fe-4S] cluster site. FAD contacts are provided by residues 194–198, 218–226, and Arg-235; these read GAGPA and EKQEYVGGL. Residues 340–343, 364–365, and Arg-371 each bind NADP(+); these read AGDT and RK. Lys-384 carries the post-translational modification N6-acetyllysine. NADP(+) is bound by residues 437–439 and 481–487; these read PFG and DVVGMAN. 480–489 is an FAD binding site; that stretch reads GDVVGMANTT. FMN is bound by residues Ser-550 and 574–575; that span reads KT. Substrate-binding positions include Asn-609 and 668 to 670; that span reads NLS. The active-site Proton acceptor is Cys-671. Residue Lys-709 participates in FMN binding. 736 to 737 lines the substrate pocket; it reads NT. FMN is bound by residues Gly-767, 793 to 795, and 816 to 817; these read TGG and CS. Ser-905 carries the phosphoserine modification. 4Fe-4S ferredoxin-type domains follow at residues 944 to 976 and 978 to 1007; these read VVAL…FDPE and HLPT…MVSR. The [4Fe-4S] cluster site is built by Cys-953, Cys-956, Cys-959, Cys-963, Cys-986, Cys-989, Cys-992, and Cys-996.

The protein belongs to the dihydropyrimidine dehydrogenase family. Homodimer. FAD serves as cofactor. The cofactor is FMN. [4Fe-4S] cluster is required as a cofactor.

It localises to the cytoplasm. It catalyses the reaction 5,6-dihydrouracil + NADP(+) = uracil + NADPH + H(+). The enzyme catalyses 5,6-dihydrothymine + NADP(+) = thymine + NADPH + H(+). It functions in the pathway amino-acid biosynthesis; beta-alanine biosynthesis. Its activity is regulated as follows. Inactivated by 5-iodouracil. Involved in pyrimidine base degradation. Catalyzes the reduction of uracil and thymine. Also involved the degradation of the chemotherapeutic drug 5-fluorouracil. This chain is Dihydropyrimidine dehydrogenase [NADP(+)], found in Rattus norvegicus (Rat).